We begin with the raw amino-acid sequence, 551 residues long: Hedycaryol synthase TPS20CT (551 aa).

Positions 266, 303, 307, 444, and 447 each coordinate (2E,6E)-farnesyl diphosphate. Positions 303 and 307 each coordinate Mg(2+). The DDXXD motif signature appears at 303–307; the sequence is DDIYD. Residues Asp-447, Ser-451, and Glu-455 each coordinate Mg(2+).

Belongs to the terpene synthase family. Tpsb subfamily. The cofactor is Mg(2+). Requires Mn(2+) as cofactor. Highly expressed in glandular trichomes.

The enzyme catalyses (2E,6E)-farnesyl diphosphate + H2O = (2E,6E)-hedycaryol + diphosphate. It functions in the pathway secondary metabolite biosynthesis; terpenoid biosynthesis. In terms of biological role, involved in sesquiterpene olefins biosynthesis, constituants of cannabinoids and terpenoids-rich resins. Catalyzes primarily the conversion of (2E)-farnesyl diphosphate to hedycaryol, which is spontaneously converted to elemol as a thermal degradation product. The sequence is that of Hedycaryol synthase TPS20CT from Cannabis sativa (Hemp).